The chain runs to 180 residues: Outer membrane protein YfaZ (180 aa).

The first 21 residues, 1–21, serve as a signal peptide directing secretion; it reads MKKIALAGLAGMLLVSASVNA.

It is found in the cell outer membrane. This is Outer membrane protein YfaZ (yfaZ) from Escherichia coli (strain K12).